The primary structure comprises 337 residues: Porphobilinogen deaminase (337 aa).

The residue at position 254 (cysteine 254) is an S-(dipyrrolylmethanemethyl)cysteine.

Belongs to the HMBS family. Requires dipyrromethane as cofactor.

It catalyses the reaction 4 porphobilinogen + H2O = hydroxymethylbilane + 4 NH4(+). It functions in the pathway porphyrin-containing compound metabolism; protoporphyrin-IX biosynthesis; coproporphyrinogen-III from 5-aminolevulinate: step 2/4. Its function is as follows. Tetrapolymerization of the monopyrrole PBG into the hydroxymethylbilane pre-uroporphyrinogen in several discrete steps. This is Porphobilinogen deaminase (pda-1) from Neurospora crassa (strain ATCC 24698 / 74-OR23-1A / CBS 708.71 / DSM 1257 / FGSC 987).